Reading from the N-terminus, the 144-residue chain is 3-hydroxyacyl-[acyl-carrier-protein] dehydratase FabZ (144 aa).

Histidine 52 is a catalytic residue.

This sequence belongs to the thioester dehydratase family. FabZ subfamily.

It is found in the cytoplasm. The enzyme catalyses a (3R)-hydroxyacyl-[ACP] = a (2E)-enoyl-[ACP] + H2O. In terms of biological role, involved in unsaturated fatty acids biosynthesis. Catalyzes the dehydration of short chain beta-hydroxyacyl-ACPs and long chain saturated and unsaturated beta-hydroxyacyl-ACPs. This Syntrophomonas wolfei subsp. wolfei (strain DSM 2245B / Goettingen) protein is 3-hydroxyacyl-[acyl-carrier-protein] dehydratase FabZ.